Consider the following 1396-residue polypeptide: DNA-directed RNA polymerase subunit beta' (1396 aa).

Zn(2+) contacts are provided by C72, C74, C87, and C90. Residues D463, D465, and D467 each coordinate Mg(2+). Residues C814, C889, C896, and C899 each coordinate Zn(2+).

This sequence belongs to the RNA polymerase beta' chain family. In terms of assembly, the RNAP catalytic core consists of 2 alpha, 1 beta, 1 beta' and 1 omega subunit. When a sigma factor is associated with the core the holoenzyme is formed, which can initiate transcription. Mg(2+) is required as a cofactor. Zn(2+) serves as cofactor.

The enzyme catalyses RNA(n) + a ribonucleoside 5'-triphosphate = RNA(n+1) + diphosphate. DNA-dependent RNA polymerase catalyzes the transcription of DNA into RNA using the four ribonucleoside triphosphates as substrates. The chain is DNA-directed RNA polymerase subunit beta' from Chlamydia muridarum (strain MoPn / Nigg).